The primary structure comprises 510 residues: ATP synthase subunit alpha (510 aa).

170-177 is a binding site for ATP; the sequence is GDRQTGKT.

Belongs to the ATPase alpha/beta chains family. In terms of assembly, F-type ATPases have 2 components, CF(1) - the catalytic core - and CF(0) - the membrane proton channel. CF(1) has five subunits: alpha(3), beta(3), gamma(1), delta(1), epsilon(1). CF(0) has three main subunits: a(1), b(2) and c(9-12). The alpha and beta chains form an alternating ring which encloses part of the gamma chain. CF(1) is attached to CF(0) by a central stalk formed by the gamma and epsilon chains, while a peripheral stalk is formed by the delta and b chains.

It is found in the cell inner membrane. It catalyses the reaction ATP + H2O + 4 H(+)(in) = ADP + phosphate + 5 H(+)(out). In terms of biological role, produces ATP from ADP in the presence of a proton gradient across the membrane. The alpha chain is a regulatory subunit. The polypeptide is ATP synthase subunit alpha (Caulobacter vibrioides (strain ATCC 19089 / CIP 103742 / CB 15) (Caulobacter crescentus)).